Consider the following 393-residue polypeptide: Selenide, water dikinase (393 aa).

Residues 1-21 (MSEKEGKVIPETNGMKRPRFD) form a disordered region. C42 is a catalytic residue. Residues K45, 68 to 70 (GMD), D93, D116, and 167 to 170 (GGQT) contribute to the ATP site. Residue D70 participates in Mg(2+) binding. D116 is a binding site for Mg(2+). D273 serves as a coordination point for Mg(2+).

The protein belongs to the selenophosphate synthase 1 family. Class I subfamily. In terms of assembly, homodimer. It depends on Mg(2+) as a cofactor.

It carries out the reaction hydrogenselenide + ATP + H2O = selenophosphate + AMP + phosphate + 2 H(+). In terms of biological role, synthesizes selenophosphate from selenide and ATP. The protein is Selenide, water dikinase of Trypanosoma brucei brucei (strain 927/4 GUTat10.1).